The chain runs to 90 residues: Small ribosomal subunit protein uS15c (90 aa).

Positions 1 to 11 (MVKNSFSSVIS) are enriched in polar residues. The segment at 1-20 (MVKNSFSSVISQEEKKENGG) is disordered.

The protein belongs to the universal ribosomal protein uS15 family. Part of the 30S ribosomal subunit.

Its subcellular location is the plastid. The protein resides in the chloroplast. The polypeptide is Small ribosomal subunit protein uS15c (rps15) (Cucumis sativus (Cucumber)).